The primary structure comprises 219 residues: Cytidylate kinase (219 aa).

Residue 21–29 (GPAASGKGT) coordinates ATP.

This sequence belongs to the cytidylate kinase family. Type 1 subfamily.

The protein resides in the cytoplasm. The catalysed reaction is CMP + ATP = CDP + ADP. It carries out the reaction dCMP + ATP = dCDP + ADP. The polypeptide is Cytidylate kinase (Rickettsia rickettsii (strain Iowa)).